A 185-amino-acid polypeptide reads, in one-letter code: Ribosome-recycling factor (185 aa).

Belongs to the RRF family.

The protein localises to the cytoplasm. Functionally, responsible for the release of ribosomes from messenger RNA at the termination of protein biosynthesis. May increase the efficiency of translation by recycling ribosomes from one round of translation to another. The sequence is that of Ribosome-recycling factor from Glaesserella parasuis serovar 5 (strain SH0165) (Haemophilus parasuis).